Here is a 100-residue protein sequence, read N- to C-terminus: UPF0125 protein CV_3462 (100 aa).

This sequence belongs to the UPF0125 (RnfH) family.

This Chromobacterium violaceum (strain ATCC 12472 / DSM 30191 / JCM 1249 / CCUG 213 / NBRC 12614 / NCIMB 9131 / NCTC 9757 / MK) protein is UPF0125 protein CV_3462.